The primary structure comprises 165 residues: Cytochrome c-type biogenesis protein CcmE (165 aa).

Over 1–29 the chain is Cytoplasmic; sequence MSATAEQNARNPKGKGGFARTVSQRKRKR. Residues 30-50 traverse the membrane as a helical; Signal-anchor for type II membrane protein segment; the sequence is LFLIGGALAVLAVAVGLMLTA. At 51–165 the chain is on the periplasmic side; it reads FNQDIRFFRT…LKKKGVWEGK (115 aa). Residues histidine 143 and tyrosine 147 each contribute to the heme site.

The protein belongs to the CcmE/CycJ family.

Its subcellular location is the cell inner membrane. Heme chaperone required for the biogenesis of c-type cytochromes. Transiently binds heme delivered by CcmC and transfers the heme to apo-cytochromes in a process facilitated by CcmF and CcmH. This is Cytochrome c-type biogenesis protein CcmE from Brucella abortus (strain S19).